We begin with the raw amino-acid sequence, 759 residues long: Probable Na(+)/H(+) antiporter C3A11.09 (759 aa).

11 helical membrane passes run 12–32 (HLAYAIIGGFTSLFMLCSLII), 36–56 (LFLGEATMATATGLIFGPYVA), 105–125 (MLLPVMIFGWLVSTGFMYALI), 133–153 (SLAIAACITATDPVLASSIVG), 172–192 (ESGCNDGMAIPFLYLAIYLII), 206–226 (IIILYECTFGCVLGAIIGVIA), 244–264 (FLVFYFVLALFCGGIGTIIGV), 295–315 (VIDLLLNLSFFVYVGAIMPWP), 319–339 (MPHMDLSVWRLVVLAICILIA), 361–381 (ALFAGHFGPIGVGALYTCLVA), and 415–435 (VVCFLVLSSIIVHGSSIAFFM). At Thr-442 the chain carries Phosphothreonine. Position 446 is a phosphoserine (Ser-446). At Thr-448 the chain carries Phosphothreonine. 5 stretches are compositionally biased toward basic and acidic residues: residues 514–529 (LREERAESPRGGHYDA), 537–547 (YESRQPRRSNE), 590–601 (IDEKLAQGDPKA), 622–647 (NLHEPDDERQREPTLGHIESSIENHR), and 655–671 (SESHLRENSVERRRREQ). Disordered regions lie at residues 514 to 558 (LREE…NPGD), 578 to 606 (SHTSSRDANGPSIDEKLAQGDPKAKSFGR), and 622 to 759 (NLHE…RAWE). A compositionally biased stretch (polar residues) spans 696–713 (NENNESSSDTRNGLLSDN). N-linked (GlcNAc...) asparagine glycosylation is found at Asn-699 and Asn-713. Residues 724-733 (RAPSAAVSSE) are compositionally biased toward low complexity. A Phosphoserine modification is found at Ser-735.

It belongs to the fungal Na(+)/H(+) exchanger family.

Its subcellular location is the membrane. Sodium export from cell, takes up external protons in exchange for internal sodium ions. The polypeptide is Probable Na(+)/H(+) antiporter C3A11.09 (sod22) (Schizosaccharomyces pombe (strain 972 / ATCC 24843) (Fission yeast)).